We begin with the raw amino-acid sequence, 140 residues long: ATP synthase epsilon chain (140 aa).

This sequence belongs to the ATPase epsilon chain family. As to quaternary structure, F-type ATPases have 2 components, CF(1) - the catalytic core - and CF(0) - the membrane proton channel. CF(1) has five subunits: alpha(3), beta(3), gamma(1), delta(1), epsilon(1). CF(0) has three main subunits: a, b and c.

The protein resides in the cell inner membrane. In terms of biological role, produces ATP from ADP in the presence of a proton gradient across the membrane. This Vibrio vulnificus (strain CMCP6) protein is ATP synthase epsilon chain.